Here is a 284-residue protein sequence, read N- to C-terminus: 2-dehydro-3-deoxyphosphooctonate aldolase (284 aa).

The protein belongs to the KdsA family.

The protein localises to the cytoplasm. The catalysed reaction is D-arabinose 5-phosphate + phosphoenolpyruvate + H2O = 3-deoxy-alpha-D-manno-2-octulosonate-8-phosphate + phosphate. It participates in carbohydrate biosynthesis; 3-deoxy-D-manno-octulosonate biosynthesis; 3-deoxy-D-manno-octulosonate from D-ribulose 5-phosphate: step 2/3. The protein operates within bacterial outer membrane biogenesis; lipopolysaccharide biosynthesis. This Salmonella enteritidis PT4 (strain P125109) protein is 2-dehydro-3-deoxyphosphooctonate aldolase.